Here is a 405-residue protein sequence, read N- to C-terminus: D-threonate kinase (405 aa).

Substrate contacts are provided by residues Asp12, Arg59, and 88-91; that span reads KVDS. Residues Ser243, 337–340, and Gly383 each bind ATP; that span reads GGDG.

It belongs to the four-carbon acid sugar kinase family.

The catalysed reaction is D-threonate + ATP = 4-O-phospho-D-threonate + ADP + H(+). Its function is as follows. Catalyzes the ATP-dependent phosphorylation of D-threonate to D-threonate 4-phosphate. Can also phosphorylate 4-hydroxy-L-threonine, with lower efficiency. This chain is D-threonate kinase, found in Bordetella bronchiseptica (strain ATCC BAA-588 / NCTC 13252 / RB50) (Alcaligenes bronchisepticus).